We begin with the raw amino-acid sequence, 752 residues long: Catalase-peroxidase (752 aa).

A disordered region spans residues 1–20 (MENELVSKVKAPVPGNQTNT). The segment at residues 111–234 (WHSAGTYRIG…LGAVQMGLIY (124 aa)) is a cross-link (tryptophyl-tyrosyl-methioninium (Trp-Tyr) (with M-260)). The Proton acceptor role is filled by His112. The segment at residues 234–260 (YVNPEGPNGKPDPAAAAVDIRETFARM) is a cross-link (tryptophyl-tyrosyl-methioninium (Tyr-Met) (with W-111)). Position 275 (His275) interacts with heme b.

It belongs to the peroxidase family. Peroxidase/catalase subfamily. As to quaternary structure, homodimer or homotetramer. The cofactor is heme b. Post-translationally, formation of the three residue Trp-Tyr-Met cross-link is important for the catalase, but not the peroxidase activity of the enzyme.

It catalyses the reaction H2O2 + AH2 = A + 2 H2O. The enzyme catalyses 2 H2O2 = O2 + 2 H2O. In terms of biological role, bifunctional enzyme with both catalase and broad-spectrum peroxidase activity. This chain is Catalase-peroxidase, found in Koribacter versatilis (strain Ellin345).